Here is a 254-residue protein sequence, read N- to C-terminus: Alcohol dehydrogenase (254 aa).

10–33 (FVAGLGGIGLDTSREIVKSGPKNL) serves as a coordination point for NAD(+). A substrate-binding site is contributed by Ser138. Tyr151 serves as the catalytic Proton acceptor.

The protein belongs to the short-chain dehydrogenases/reductases (SDR) family. Homodimer.

It catalyses the reaction a primary alcohol + NAD(+) = an aldehyde + NADH + H(+). The catalysed reaction is a secondary alcohol + NAD(+) = a ketone + NADH + H(+). In Drosophila planitibia (Fruit fly), this protein is Alcohol dehydrogenase (Adh).